Reading from the N-terminus, the 480-residue chain is MSALAQNETIAHQIKQQGGVEAYLHAQQEKGLLRFLTCGSVDDGKSTLIGRLLHDTRQIYEDQLSTLQNDSKRIGTQGEKLDLALLVDGLAAEREQGITIDVAYRYFSTEKRKFIIADTPGHEQYTRNMATGASTCDLSILLIDARKGVQEQTRRHSFISTLLGIRHLVVAVNKMDLMEYRQEVFNQIKQDYMNFAGQLPTNLDVHFVPISALDGDNIVTISRNMDWYEGPTLLDILETVDVKKEASKQLLRFPVQYVSRPDLDFRGYSGTLSSGILRKGQKVKVMPSGICSQVERIVTFDGDLDFAVPGEAITVVLKDEIDISRGDLLISADDEMMVTRHALVDVVWMSEQPLVQGQNLDIKVAGKKSRGKVENIQYQVDITHLTQRVAVDLPLNAIGSVEFSFEEPLMLDSYQQNSDTGGIILVDRLTNVTVGAGLVREIQTDVYEGPKEFSEFELELNRLIRRHFPHWGARDLLGGK.

The tr-type G domain maps to 30–248 (KGLLRFLTCG…TVDVKKEASK (219 aa)). Residues 39–46 (GSVDDGKS) form a G1 region. A GTP-binding site is contributed by 39–46 (GSVDDGKS). Residues 97 to 101 (GITID) are G2. Positions 118–121 (DTPG) are G3. GTP contacts are provided by residues 118 to 122 (DTPGH) and 173 to 176 (NKMD). Positions 173–176 (NKMD) are G4. The tract at residues 211–213 (SAL) is G5.

This sequence belongs to the TRAFAC class translation factor GTPase superfamily. Classic translation factor GTPase family. CysN/NodQ subfamily. Heterodimer composed of CysD, the smaller subunit, and CysN.

The catalysed reaction is sulfate + ATP + H(+) = adenosine 5'-phosphosulfate + diphosphate. Its pathway is sulfur metabolism; hydrogen sulfide biosynthesis; sulfite from sulfate: step 1/3. Functionally, with CysD forms the ATP sulfurylase (ATPS) that catalyzes the adenylation of sulfate producing adenosine 5'-phosphosulfate (APS) and diphosphate, the first enzymatic step in sulfur assimilation pathway. APS synthesis involves the formation of a high-energy phosphoric-sulfuric acid anhydride bond driven by GTP hydrolysis by CysN coupled to ATP hydrolysis by CysD. The sequence is that of Sulfate adenylyltransferase subunit 1 from Photorhabdus laumondii subsp. laumondii (strain DSM 15139 / CIP 105565 / TT01) (Photorhabdus luminescens subsp. laumondii).